Consider the following 206-residue polypeptide: Accelerated cell death 11 (206 aa).

An N-acylsphingoid base 1-phosphate-binding residues include Asp60, Lys64, Arg99, Arg103, and His143.

It belongs to the GLTP family. As to quaternary structure, interacts with BPA1, PRA1F2 and PRA1F3.

The protein localises to the cytoplasm. Exhibits selective intermembrane transfer of ceramide-1-phosphate (C1P) and phytoceramide-1-phosphate. Does not transport ceramide (Cer) or GalCer, suggesting a requirement for phosphate in the headgroup for functionality. Transports in vitro sphingosine, but not glycosphingolipids. Also has some in vitro activity with sphingomyelin, a lipid not detected in plant tissues. The transport function may be not directly involved in regulating cell death. Rather, perturbations in the function of ACD11 or related components could be monitored by R-proteins, which then mediate defense and programmed cell death (PCD), as proposed in the guard hypothesis. C1P transfer is stimulated by phosphatidylserine in C1P source vesicles. Regulates autophagy, inflammasome mediated IL1B and IL18 processing, and pyroptosis, but not apoptosis. In Arabidopsis thaliana (Mouse-ear cress), this protein is Accelerated cell death 11.